Consider the following 83-residue polypeptide: MKQGIHPDYHPVVFMDSATGFKFISGSTKTSKETVKWEDGKEYPLVRVEISSDSHPFYTGKQKFTQADGRVDRFNKKYGLDKK.

It belongs to the bacterial ribosomal protein bL31 family. Type B subfamily. As to quaternary structure, part of the 50S ribosomal subunit.

The polypeptide is Large ribosomal subunit protein bL31B (Lacticaseibacillus casei (strain BL23) (Lactobacillus casei)).